The chain runs to 187 residues: Peptidyl-tRNA hydrolase (187 aa).

TRNA is bound at residue F14. The Proton acceptor role is filled by H19. TRNA contacts are provided by Y64, N66, and N112.

This sequence belongs to the PTH family. Monomer.

The protein resides in the cytoplasm. It catalyses the reaction an N-acyl-L-alpha-aminoacyl-tRNA + H2O = an N-acyl-L-amino acid + a tRNA + H(+). Its function is as follows. Hydrolyzes ribosome-free peptidyl-tRNAs (with 1 or more amino acids incorporated), which drop off the ribosome during protein synthesis, or as a result of ribosome stalling. Catalyzes the release of premature peptidyl moieties from peptidyl-tRNA molecules trapped in stalled 50S ribosomal subunits, and thus maintains levels of free tRNAs and 50S ribosomes. The chain is Peptidyl-tRNA hydrolase from Oceanobacillus iheyensis (strain DSM 14371 / CIP 107618 / JCM 11309 / KCTC 3954 / HTE831).